Reading from the N-terminus, the 185-residue chain is Ribosome-recycling factor (185 aa).

Residues 138–185 (ALKKQEKDGEITEDEERRLEKEVQKVTDESTKKIDQMADNKRKEIIQG) form a disordered region.

The protein belongs to the RRF family.

The protein localises to the cytoplasm. In terms of biological role, responsible for the release of ribosomes from messenger RNA at the termination of protein biosynthesis. May increase the efficiency of translation by recycling ribosomes from one round of translation to another. The protein is Ribosome-recycling factor of Lactobacillus delbrueckii subsp. bulgaricus (strain ATCC 11842 / DSM 20081 / BCRC 10696 / JCM 1002 / NBRC 13953 / NCIMB 11778 / NCTC 12712 / WDCM 00102 / Lb 14).